Reading from the N-terminus, the 350-residue chain is Dihydroorotase (350 aa).

The Zn(2+) site is built by His-13 and His-15. Substrate-binding positions include 15-17 (HLR) and Asn-41. Zn(2+)-binding residues include Lys-99, His-136, and His-174. Position 99 is an N6-carboxylysine (Lys-99). His-136 is a binding site for substrate. Leu-219 provides a ligand contact to substrate. Asp-247 contacts Zn(2+). Asp-247 is an active-site residue. 2 residues coordinate substrate: His-251 and Ala-263.

This sequence belongs to the metallo-dependent hydrolases superfamily. DHOase family. Class II DHOase subfamily. Homodimer. Zn(2+) serves as cofactor.

It carries out the reaction (S)-dihydroorotate + H2O = N-carbamoyl-L-aspartate + H(+). The protein operates within pyrimidine metabolism; UMP biosynthesis via de novo pathway; (S)-dihydroorotate from bicarbonate: step 3/3. Catalyzes the reversible cyclization of carbamoyl aspartate to dihydroorotate. The chain is Dihydroorotase from Allorhizobium ampelinum (strain ATCC BAA-846 / DSM 112012 / S4) (Agrobacterium vitis (strain S4)).